A 271-amino-acid chain; its full sequence is Shikimate dehydrogenase (NADP(+)) (271 aa).

Shikimate is bound by residues 14–16 and Thr-61; that span reads SLS. Lys-65 (proton acceptor) is an active-site residue. Shikimate-binding residues include Asn-86 and Asp-101. NADP(+) contacts are provided by residues 125 to 129 and Ile-212; that span reads GAGGA. Tyr-214 lines the shikimate pocket. Gly-235 is a binding site for NADP(+).

Belongs to the shikimate dehydrogenase family. In terms of assembly, homodimer.

It catalyses the reaction shikimate + NADP(+) = 3-dehydroshikimate + NADPH + H(+). It participates in metabolic intermediate biosynthesis; chorismate biosynthesis; chorismate from D-erythrose 4-phosphate and phosphoenolpyruvate: step 4/7. Involved in the biosynthesis of the chorismate, which leads to the biosynthesis of aromatic amino acids. Catalyzes the reversible NADPH linked reduction of 3-dehydroshikimate (DHSA) to yield shikimate (SA). This chain is Shikimate dehydrogenase (NADP(+)), found in Clostridium perfringens (strain SM101 / Type A).